Reading from the N-terminus, the 102-residue chain is Small ribosomal subunit protein uS10 (102 aa).

This sequence belongs to the universal ribosomal protein uS10 family. As to quaternary structure, part of the 30S ribosomal subunit.

Functionally, involved in the binding of tRNA to the ribosomes. The sequence is that of Small ribosomal subunit protein uS10 from Leptospira biflexa serovar Patoc (strain Patoc 1 / Ames).